A 298-amino-acid chain; its full sequence is Oligodendrocyte transcription factor 2 (298 aa).

The span at 1–13 (MDSDASLVSSRPS) shows a compositional bias: polar residues. 2 disordered regions span residues 1–60 (MDSD…SAEL) and 79–102 (SSSS…MTEP). A compositionally biased stretch (gly residues) spans 26–41 (NKGGGGGGGGGGGFTG). Over residues 79 to 91 (SSSSSASSASSAS) the composition is skewed to low complexity. One can recognise a bHLH domain in the interval 106–160 (QLRLKINSRERKRMHDLNIAMDGLREVMPYAHGPSVRKLSKIATLLLARNYILML).

It is found in the nucleus. Functionally, required for oligodendrocyte and motor neuron specification in the spinal cord. This is Oligodendrocyte transcription factor 2 (OLIG2) from Gallus gallus (Chicken).